The following is a 106-amino-acid chain: ATP-dependent Clp protease adapter protein ClpS (106 aa).

Belongs to the ClpS family. In terms of assembly, binds to the N-terminal domain of the chaperone ClpA.

Functionally, involved in the modulation of the specificity of the ClpAP-mediated ATP-dependent protein degradation. In Vibrio parahaemolyticus serotype O3:K6 (strain RIMD 2210633), this protein is ATP-dependent Clp protease adapter protein ClpS.